The sequence spans 257 residues: Uracil phosphoribosyltransferase homolog (257 aa).

GTP contacts are provided by residues Arg81, Arg90, and 124-127 (EKGN). Arg134 serves as a coordination point for 5-phospho-alpha-D-ribose 1-diphosphate. Residues Arg151 and Arg180 each contribute to the GTP site. Residue 186 to 194 (YPILSTGNT) coordinates 5-phospho-alpha-D-ribose 1-diphosphate. Residue 247–249 (THF) participates in uracil binding.

Belongs to the UPRTase family.

It is found in the cytoplasm. It localises to the nucleus. The sequence is that of Uracil phosphoribosyltransferase homolog (uprt) from Danio rerio (Zebrafish).